Here is a 245-residue protein sequence, read N- to C-terminus: tRNA (guanine-N(7)-)-methyltransferase (245 aa).

Positions 75, 100, 127, and 150 each coordinate S-adenosyl-L-methionine. Residue Asp150 is part of the active site. Residues Lys154, Asp186, and Thr223 to Glu226 each bind substrate.

It belongs to the class I-like SAM-binding methyltransferase superfamily. TrmB family.

It carries out the reaction guanosine(46) in tRNA + S-adenosyl-L-methionine = N(7)-methylguanosine(46) in tRNA + S-adenosyl-L-homocysteine. The protein operates within tRNA modification; N(7)-methylguanine-tRNA biosynthesis. Its function is as follows. Catalyzes the formation of N(7)-methylguanine at position 46 (m7G46) in tRNA. The sequence is that of tRNA (guanine-N(7)-)-methyltransferase from Photobacterium profundum (strain SS9).